The primary structure comprises 416 residues: Thyroid hormone receptor alpha (416 aa).

Residues 1 to 30 (MEPISNVEDPNSSEGDEKRWPDGPKRKRKN) form a disordered region. A modulating region spans residues 1-58 (MEPISNVEDPNSSEGDEKRWPDGPKRKRKNSTCSVKSMSALSLSVQGYIPSYLEKDEP). Positions 15–24 (GDEKRWPDGP) are enriched in basic and acidic residues. Zn(2+) is bound by residues cysteine 59, cysteine 62, cysteine 76, cysteine 79, cysteine 97, cysteine 103, cysteine 113, and cysteine 116. NR C4-type zinc fingers lie at residues 59–79 (CVVCGDKATGYHYRCITCEGC) and 97–121 (CKYDGCCIIDKITRNQCQLCRFRKC). The segment at residues 59 to 133 (CVVCGDKATG…VCMAMDLVLD (75 aa)) is a DNA-binding region (nuclear receptor). The region spanning 169-413 (SEWELIRHVT…PPLFLEVFED (245 aa)) is the NR LBD domain. 3,3',5-triiodo-L-thyronine is bound by residues arginine 234 and serine 283.

This sequence belongs to the nuclear hormone receptor family. NR1 subfamily.

It localises to the nucleus. Functionally, nuclear hormone receptor that can act as a repressor or activator of transcription. High affinity receptor for thyroid hormones, including triiodothyronine and thyroxine. This Salmo salar (Atlantic salmon) protein is Thyroid hormone receptor alpha (thra1).